The primary structure comprises 166 residues: Ribosome maturation factor RimM (166 aa).

The region spanning 90 to 163 (EGEFLVSQII…TVTIELLEGL (74 aa)) is the PRC barrel domain.

The protein belongs to the RimM family. In terms of assembly, binds ribosomal protein uS19.

It localises to the cytoplasm. Functionally, an accessory protein needed during the final step in the assembly of 30S ribosomal subunit, possibly for assembly of the head region. Essential for efficient processing of 16S rRNA. May be needed both before and after RbfA during the maturation of 16S rRNA. It has affinity for free ribosomal 30S subunits but not for 70S ribosomes. The polypeptide is Ribosome maturation factor RimM (Oenococcus oeni (strain ATCC BAA-331 / PSU-1)).